The chain runs to 418 residues: Glutamyl-tRNA reductase (418 aa).

Substrate contacts are provided by residues 49 to 52 (TCNR), Ser-109, 114 to 116 (EPQ), and Gln-120. Cys-50 serves as the catalytic Nucleophile. 189-194 (GAGETI) is a binding site for NADP(+).

Belongs to the glutamyl-tRNA reductase family. Homodimer.

The enzyme catalyses (S)-4-amino-5-oxopentanoate + tRNA(Glu) + NADP(+) = L-glutamyl-tRNA(Glu) + NADPH + H(+). It functions in the pathway porphyrin-containing compound metabolism; protoporphyrin-IX biosynthesis; 5-aminolevulinate from L-glutamyl-tRNA(Glu): step 1/2. In terms of biological role, catalyzes the NADPH-dependent reduction of glutamyl-tRNA(Glu) to glutamate 1-semialdehyde (GSA). The chain is Glutamyl-tRNA reductase from Escherichia coli O139:H28 (strain E24377A / ETEC).